The primary structure comprises 457 residues: tRNA modification GTPase MnmE (457 aa).

(6S)-5-formyl-5,6,7,8-tetrahydrofolate contacts are provided by Arg25, Glu87, and Arg126. In terms of domain architecture, TrmE-type G spans 223 to 377 (GIATAIIGRP…IEEKINQLFF (155 aa)). Asn233 is a binding site for K(+). GTP contacts are provided by residues 233 to 238 (NVGKSS), 252 to 258 (TDIAGTT), and 277 to 280 (DTAG). Ser237 provides a ligand contact to Mg(2+). K(+) is bound by residues Thr252, Ile254, and Thr257. Mg(2+) is bound at residue Thr258. (6S)-5-formyl-5,6,7,8-tetrahydrofolate is bound at residue Lys457.

The protein belongs to the TRAFAC class TrmE-Era-EngA-EngB-Septin-like GTPase superfamily. TrmE GTPase family. In terms of assembly, homodimer. Heterotetramer of two MnmE and two MnmG subunits. K(+) is required as a cofactor.

The protein localises to the cytoplasm. Its function is as follows. Exhibits a very high intrinsic GTPase hydrolysis rate. Involved in the addition of a carboxymethylaminomethyl (cmnm) group at the wobble position (U34) of certain tRNAs, forming tRNA-cmnm(5)s(2)U34. In Streptococcus suis (strain 98HAH33), this protein is tRNA modification GTPase MnmE.